The chain runs to 110 residues: Class I hydrophobin 2 (110 aa).

Positions 1–17 are cleaved as a signal peptide; the sequence is MQFKFLTTVALATLAVA. Cystine bridges form between C28–C89, C36–C83, C37–C71, and C90–C103. The N-linked (GlcNAc...) asparagine glycan is linked to N57.

It belongs to the fungal hydrophobin family. In terms of assembly, self-assembles to form functional amyloid fibrils called rodlets. Self-assembly into fibrillar rodlets occurs spontaneously at hydrophobic:hydrophilic interfaces and the rodlets further associate laterally to form amphipathic monolayers.

The protein localises to the secreted. Its subcellular location is the cell wall. Aerial growth, conidiation, and dispersal of filamentous fungi in the environment rely upon a capability of their secreting small amphipathic proteins called hydrophobins (HPBs) with low sequence identity. Class I can self-assemble into an outermost layer of rodlet bundles on aerial cell surfaces, conferring cellular hydrophobicity that supports fungal growth, development and dispersal; whereas Class II form highly ordered films at water-air interfaces through intermolecular interactions but contribute nothing to the rodlet structure. CoH2 is an asexual monokaryon-specific class I hydrophobin that is involved in aerial growth of mycelia. This Coprinopsis cinerea (Inky cap fungus) protein is Class I hydrophobin 2.